Consider the following 374-residue polypeptide: Putative glutamate--cysteine ligase 2 (374 aa).

The protein belongs to the glutamate--cysteine ligase type 2 family. YbdK subfamily.

It carries out the reaction L-cysteine + L-glutamate + ATP = gamma-L-glutamyl-L-cysteine + ADP + phosphate + H(+). Functionally, ATP-dependent carboxylate-amine ligase which exhibits weak glutamate--cysteine ligase activity. In Verminephrobacter eiseniae (strain EF01-2), this protein is Putative glutamate--cysteine ligase 2.